The following is a 99-amino-acid chain: Acylphosphatase-1 (99 aa).

N-acetylalanine is present on Ala2. The 91-residue stretch at 9–99 (SVDYEIFGKV…LDYSDFQIVK (91 aa)) folds into the Acylphosphatase-like domain. Residues Arg24 and Asn42 contribute to the active site.

This sequence belongs to the acylphosphatase family. As to expression, organ-common type isozyme is found in many different tissues.

It carries out the reaction an acyl phosphate + H2O = a carboxylate + phosphate + H(+). This Homo sapiens (Human) protein is Acylphosphatase-1 (ACYP1).